The chain runs to 117 residues: Large ribosomal subunit protein bL19 (117 aa).

The protein belongs to the bacterial ribosomal protein bL19 family.

Functionally, this protein is located at the 30S-50S ribosomal subunit interface and may play a role in the structure and function of the aminoacyl-tRNA binding site. In Phocaeicola vulgatus (strain ATCC 8482 / DSM 1447 / JCM 5826 / CCUG 4940 / NBRC 14291 / NCTC 11154) (Bacteroides vulgatus), this protein is Large ribosomal subunit protein bL19.